Consider the following 856-residue polypeptide: Paladin (856 aa).

Low complexity predominate over residues 1–16 (MGTTASTAQQTVSAGT). Residues 1-29 (MGTTASTAQQTVSAGTPFEGLQGSGTMDS) are disordered. Gly2 carries N-myristoyl glycine lipidation. Ser86 is modified (phosphoserine).

It belongs to the paladin family. In terms of tissue distribution, expressed in endothelial cells, and in certain larger vessels, in mural cells. In the brain, possibly expressed in microglia. Expressed in peripheral blood mononuclear cells (at protein level).

It is found in the cytoplasm. The protein localises to the cytosol. The sequence is that of Paladin (PALD1) from Homo sapiens (Human).